Reading from the N-terminus, the 311-residue chain is Putative tenascin-XA (311 aa).

Disordered stretches follow at residues 1-47 (MEDK…EPRL) and 124-150 (LSAEGTTGLAPAGQTSEESRPRLSQLS). Fibronectin type-III domains are found at residues 41-135 (PPEE…LAPA), 145-249 (RLSQ…SPRD), and 250-311 (LQFS…SCVH).

As to expression, expressed in the adrenal gland.

In Homo sapiens (Human), this protein is Putative tenascin-XA (TNXA).